Reading from the N-terminus, the 256-residue chain is Lysine-rich coiled-coil protein 1 (256 aa).

Disordered stretches follow at residues 61–83 (QRIP…TEDR) and 141–256 (GHST…ILGF). Polar residues-rich tracts occupy residues 64–79 (PSGT…SSSQ) and 141–153 (GHST…SHRQ). 2 stretches are compositionally biased toward basic and acidic residues: residues 161–188 (HLEE…DLNK) and 218–227 (KNRDVSSKKE). A coiled-coil region spans residues 208-247 (TEKLKNRKEKKNRDVSSKKEDRKRRKEKKEQGEERTEEEM).

In Rattus norvegicus (Rat), this protein is Lysine-rich coiled-coil protein 1 (Krcc1).